The primary structure comprises 303 residues: UDP-N-acetylenolpyruvoylglucosamine reductase (303 aa).

An FAD-binding PCMH-type domain is found at 27-217; that stretch reads KVGGISQVFY…QTVRKLTQPI (191 aa). Arginine 175 is an active-site residue. Catalysis depends on serine 224, which acts as the Proton donor. The active site involves glutamate 294.

The protein belongs to the MurB family. FAD is required as a cofactor.

It is found in the cytoplasm. The enzyme catalyses UDP-N-acetyl-alpha-D-muramate + NADP(+) = UDP-N-acetyl-3-O-(1-carboxyvinyl)-alpha-D-glucosamine + NADPH + H(+). It participates in cell wall biogenesis; peptidoglycan biosynthesis. Functionally, cell wall formation. In Orientia tsutsugamushi (strain Ikeda) (Rickettsia tsutsugamushi), this protein is UDP-N-acetylenolpyruvoylglucosamine reductase.